Here is a 1577-residue protein sequence, read N- to C-terminus: High molecular weight form of myosin-1 (1577 aa).

Residues 75 to 751 (KSVDDLVQMD…EQRGLELQRN (677 aa)) form the Myosin motor domain. K119 carries the post-translational modification N6,N6,N6-trimethyllysine. 168 to 175 (GESGAGKT) provides a ligand contact to ATP. 2 actin-binding regions span residues 628–650 (LDSL…KPNS) and 730–744 (QVGK…PEQR). Residues 755–782 (ERVTIQIQAGVRRMFARRLYKRMRAIKP) form the IQ domain. The MyTH4 domain occupies 1261-1401 (WTKSPIPTSL…PNVEQILAAK (141 aa)). Disordered regions lie at residues 1442–1466 (SRPA…QQAA) and 1483–1516 (QQQQ…LPAE). 2 stretches are compositionally biased toward low complexity: residues 1444–1466 (PAQA…QQAA) and 1483–1497 (QQQQ…QQQA). The region spanning 1519 to 1577 (EEYKQVEVVYDYDGGGDAQRLVLVKGAIITVIKEYEGWAYGSTDDGQVGLYPINYTRPI) is the SH3 domain.

The protein belongs to the TRAFAC class myosin-kinesin ATPase superfamily. Myosin family. As to quaternary structure, myosin I heavy chain is single-headed.

This chain is High molecular weight form of myosin-1, found in Acanthamoeba castellanii (Amoeba).